The primary structure comprises 451 residues: G-protein coupled receptor 61 (451 aa).

Residues Met-1–Ser-14 show a composition bias toward low complexity. The interval Met-1–Val-31 is disordered. Topologically, residues Met-1–Val-44 are extracellular. The N-linked (GlcNAc...) asparagine glycan is linked to Asn-12. The helical transmembrane segment at Ala-45–Ile-67 threads the bilayer. Over Ala-68–Lys-75 the chain is Cytoplasmic. The helical transmembrane segment at Phe-76 to Met-98 threads the bilayer. The Extracellular portion of the chain corresponds to Leu-99–Glu-112. The helical transmembrane segment at Val-113–Ala-135 threads the bilayer. Over Ile-136–Thr-155 the chain is Cytoplasmic. The helical transmembrane segment at Leu-156–Val-178 threads the bilayer. Topologically, residues Leu-179–Gln-206 are extracellular. Residues Leu-207–Cys-229 traverse the membrane as a helical segment. Residues Ser-230–Val-287 are Cytoplasmic-facing. Residues Val-288–Val-310 traverse the membrane as a helical segment. Residues Ala-311–Ser-324 lie on the Extracellular side of the membrane. Residues Val-325–Leu-344 form a helical membrane-spanning segment. Residues Asn-345–Ser-451 lie on the Cytoplasmic side of the membrane.

This sequence belongs to the G-protein coupled receptor 1 family. As to quaternary structure, forms heterodimer with MTNR1B. Interacts with ARRB1 and ARRB2 in a spontaneous and agonist-independent manner; leading to the internalization of GPR61 in the endosomal compartment. Expressed in brain; detected in frontal and temporal lobes, occipital pole, amygdala and hippocampus. Also expressed in testis and T cells, B cells, and monocyte. Low expression in many other tissues. Widely expressed in the hippocampus (at protein level).

The protein resides in the cell membrane. The protein localises to the endosome membrane. Functionally, orphan G-protein coupled receptor. Constitutively activates the G(s)-alpha/cAMP signaling pathway. Shows a reciprocal regulatory interaction with the melatonin receptor MTNR1B most likely through receptor heteromerization. May be involved in the regulation of food intake and body weight. The protein is G-protein coupled receptor 61 (GPR61) of Homo sapiens (Human).